Reading from the N-terminus, the 860-residue chain is uncharacterized protein (860 aa).

Basic and acidic residues-rich tracts occupy residues 334 to 345 and 536 to 551; these read LEKKSLQSDSKN and EDQK…LSDK. Disordered stretches follow at residues 334–360, 530–551, 708–798, and 813–842; these read LEKK…LRKE, EEDD…LSDK, ARKT…EDEF, and PFNE…RKAI. 3 stretches are compositionally biased toward acidic residues: residues 716 to 725, 738 to 750, and 813 to 824; these read DEEGEIDEDE, EMDE…DSEE, and PFNETDDEEEIQ. Phosphoserine is present on residues Ser-744 and Ser-748.

The protein belongs to the CBF/MAK21 family.

This is an uncharacterized protein from Schizosaccharomyces pombe (strain 972 / ATCC 24843) (Fission yeast).